The following is an 858-amino-acid chain: Protein 4.1 (858 aa).

Residues 1–125 are disordered; the sequence is MTTEKSLAAE…KEIELGNSLD (125 aa). S14 is modified (phosphoserine). The segment covering 31–50 has biased composition (low complexity); the sequence is QQETQLEEASQAAAAEGSDQ. Position 62 is a phosphothreonine (T62). Residues 63–77 are compositionally biased toward basic and acidic residues; it reads PTHEDLTKNKERTSE. The span at 78–89 shows a compositional bias: low complexity; sequence SRGLSRLLSSFL. Residues S86, S87, S97, S106, S123, S151, S153, and S154 each carry the phosphoserine modification. Basic and acidic residues predominate over residues 103 to 119; it reads EVESEKEKGEGGQKEIE. The disordered stretch occupies residues 155–208; that stretch reads IETQPAQEEHREDPDSETKEGEGIEECSGTEVKEDPESRAEREPEASQKPVRRH. Composition is skewed to basic and acidic residues over residues 161-176 and 185-200; these read QEEH…KEGE and EVKE…EPEA. The residue at position 192 (S192) is a Phosphoserine. An FERM domain is found at 211 to 492; that stretch reads MHCKVSLLDD…EHHTFFRLTS (282 aa). Residue Y223 is modified to Phosphotyrosine. At T379 the chain carries Phosphothreonine. The hydrophilic stretch occupies residues 495–608; that stretch reads TIPKSKFLAL…PAEPEPTEAW (114 aa). Residues 518-636 are disordered; that stretch reads TRQASALIDR…TQKLAGKGED (119 aa). Residues S522, S541, S543, and S556 each carry the phosphoserine modification. Basic and acidic residues-rich tracts occupy residues 581 to 595 and 606 to 615; these read TPKE…RGEE and EAWKVEKTHT. Positions 609–707 are spectrin--actin-binding; sequence KVEKTHTEVT…WDKRLSTHSP (99 aa). Polar residues predominate over residues 616–629; sequence EVTVPTSNGDQTQK. Residue Y654 is modified to Phosphotyrosine. Residues S658, S668, S678, S703, and S706 each carry the phosphoserine modification. A C-terminal (CTD) region spans residues 710-858; sequence TLNINGQVPT…VHQETEISEE (149 aa). Phosphothreonine is present on residues T730 and T853.

As to quaternary structure, binds with a high affinity to glycophorin and with lower affinity to band III protein. Associates with the nuclear mitotic apparatus. Binds calmodulin, CPAP and DLG1. Also found to associate with contractile apparatus and tight junctions. Interacts with NUMA1; this interaction is negatively regulated by CDK1 during metaphase and promotes anaphase-specific localization of NUMA1 in symmetrically dividing cells. Interacts with ATP2B1; regulates small intestinal calcium absorption through regulation of membrane expression of ATP2B1. In terms of processing, O-glycosylated; contains N-acetylglucosamine side chains in the C-terminal domain. Post-translationally, phosphorylated at multiple sites by different protein kinases and each phosphorylation event selectively modulates the protein's functions. Phosphorylation on Tyr-654 reduces the ability of 4.1 to promote the assembly of the spectrin/actin/4.1 ternary complex.

It localises to the nucleus. The protein resides in the cytoplasm. It is found in the cytoskeleton. The protein localises to the cell cortex. In terms of biological role, protein 4.1 is a major structural element of the erythrocyte membrane skeleton. It plays a key role in regulating membrane physical properties of mechanical stability and deformability by stabilizing spectrin-actin interaction. Recruits DLG1 to membranes. Required for dynein-dynactin complex and NUMA1 recruitment at the mitotic cell cortex during anaphase. The protein is Protein 4.1 of Mus musculus (Mouse).